A 158-amino-acid chain; its full sequence is Pyruvoyl-dependent arginine decarboxylase (158 aa).

Residue Ser44 is modified to Pyruvic acid (Ser).

The protein belongs to the PdaD family. Requires pyruvate as cofactor.

It carries out the reaction L-arginine + H(+) = agmatine + CO2. In Pyrococcus abyssi (strain GE5 / Orsay), this protein is Pyruvoyl-dependent arginine decarboxylase.